The following is a 320-amino-acid chain: Cytochrome f (320 aa).

A signal peptide spans 1 to 36 (MKLNSLINLIQKSIYSCTLLLTILNIICIAPNSSNA). Phenylalanine 37, cysteine 57, cysteine 60, and histidine 61 together coordinate heme. The helical transmembrane segment at 286–305 (IKGMIAFFFVSVLAQIFFVL) threads the bilayer.

The protein belongs to the cytochrome f family. As to quaternary structure, the 4 large subunits of the cytochrome b6-f complex are cytochrome b6, subunit IV (17 kDa polypeptide, petD), cytochrome f and the Rieske protein, while the 4 small subunits are PetG, PetL, PetM and PetN. The complex functions as a dimer. The cofactor is heme.

The protein resides in the plastid. It is found in the chloroplast thylakoid membrane. In terms of biological role, component of the cytochrome b6-f complex, which mediates electron transfer between photosystem II (PSII) and photosystem I (PSI), cyclic electron flow around PSI, and state transitions. This is Cytochrome f (petA) from Porphyra purpurea (Red seaweed).